Here is a 188-residue protein sequence, read N- to C-terminus: Elongation factor P (188 aa).

At K34 the chain carries N6-(3,6-diaminohexanoyl)-5-hydroxylysine.

Belongs to the elongation factor P family. Post-translationally, may be beta-lysylated on the epsilon-amino group of Lys-34 by the combined action of EpmA and EpmB, and then hydroxylated on the C5 position of the same residue by EpmC (if this protein is present). Lysylation is critical for the stimulatory effect of EF-P on peptide-bond formation. The lysylation moiety may extend toward the peptidyltransferase center and stabilize the terminal 3-CCA end of the tRNA. Hydroxylation of the C5 position on Lys-34 may allow additional potential stabilizing hydrogen-bond interactions with the P-tRNA.

Its subcellular location is the cytoplasm. It participates in protein biosynthesis; polypeptide chain elongation. Functionally, involved in peptide bond synthesis. Alleviates ribosome stalling that occurs when 3 or more consecutive Pro residues or the sequence PPG is present in a protein, possibly by augmenting the peptidyl transferase activity of the ribosome. Modification of Lys-34 is required for alleviation. The sequence is that of Elongation factor P from Aliivibrio fischeri (strain ATCC 700601 / ES114) (Vibrio fischeri).